Reading from the N-terminus, the 335-residue chain is Pyridoxal 5'-phosphate synthase subunit PdxS (335 aa).

D-ribose 5-phosphate is bound at residue D30. Catalysis depends on K87, which acts as the Schiff-base intermediate with D-ribose 5-phosphate. Residue G159 coordinates D-ribose 5-phosphate. Position 171 (R171) interacts with D-glyceraldehyde 3-phosphate. D-ribose 5-phosphate contacts are provided by residues G257 and 278-279 (GS).

It belongs to the PdxS/SNZ family. In terms of assembly, in the presence of PdxT, forms a dodecamer of heterodimers.

It carries out the reaction aldehydo-D-ribose 5-phosphate + D-glyceraldehyde 3-phosphate + L-glutamine = pyridoxal 5'-phosphate + L-glutamate + phosphate + 3 H2O + H(+). The protein operates within cofactor biosynthesis; pyridoxal 5'-phosphate biosynthesis. Functionally, catalyzes the formation of pyridoxal 5'-phosphate from ribose 5-phosphate (RBP), glyceraldehyde 3-phosphate (G3P) and ammonia. The ammonia is provided by the PdxT subunit. Can also use ribulose 5-phosphate and dihydroxyacetone phosphate as substrates, resulting from enzyme-catalyzed isomerization of RBP and G3P, respectively. The polypeptide is Pyridoxal 5'-phosphate synthase subunit PdxS (Thermococcus onnurineus (strain NA1)).